Consider the following 106-residue polypeptide: Defensin-like protein 1 (106 aa).

An N-terminal signal peptide occupies residues 1-25 (MARSLCFMAFAVLAMMLFVAYEVQA). Cystine bridges form between Cys29/Cys73, Cys40/Cys60, Cys46/Cys67, and Cys50/Cys69.

The protein belongs to the DEFL family.

The protein localises to the secreted. Its subcellular location is the vacuole. This Nicotiana paniculata protein is Defensin-like protein 1 (THIO1).